A 474-amino-acid polypeptide reads, in one-letter code: Glutamate--tRNA ligase (474 aa).

The 'HIGH' region signature appears at 11–21; the sequence is PSPTGFLHIGG. The 'KMSKS' region signature appears at 240 to 244; sequence KLSKR. Lys243 contributes to the ATP binding site.

This sequence belongs to the class-I aminoacyl-tRNA synthetase family. Glutamate--tRNA ligase type 1 subfamily. As to quaternary structure, monomer.

The protein resides in the cytoplasm. The enzyme catalyses tRNA(Glu) + L-glutamate + ATP = L-glutamyl-tRNA(Glu) + AMP + diphosphate. Catalyzes the attachment of glutamate to tRNA(Glu) in a two-step reaction: glutamate is first activated by ATP to form Glu-AMP and then transferred to the acceptor end of tRNA(Glu). The protein is Glutamate--tRNA ligase of Nitrobacter hamburgensis (strain DSM 10229 / NCIMB 13809 / X14).